The primary structure comprises 295 residues: MSKIPSVNIKELLDAGVHFGHKTSRWNPKMASYIYGERDDVHIIDLRQSAALMSVALNTIYETVKKDGKILFVSTKIQASDIIAEYAEKCGQYYVNHRWLGGMLTNWKTIAGSIEKLNKLEKTLENEEALMGYTKKEILDMSRKKEKLLLSLAGIRNLNSKPDLLVVIDTNKEHIAINEAVKLNVPIVAVVDTNSNPDNVNYPIPGNDDSIRSIRLYCSLFADAALQGLEESMKASGVDMGAMQEHTDKALTSKNVSKLKQAKKFSKTKNIDEETNTEFEQALNDADENKNSDNA.

A disordered region spans residues 260-295 (KQAKKFSKTKNIDEETNTEFEQALNDADENKNSDNA).

Belongs to the universal ribosomal protein uS2 family.

The protein is Small ribosomal subunit protein uS2 of Rickettsia felis (strain ATCC VR-1525 / URRWXCal2) (Rickettsia azadi).